The following is a 413-amino-acid chain: Zinc finger CCCH domain-containing protein 6 (413 aa).

Disordered stretches follow at residues 28-61 (PSQVGSESQDHLQAKSPLASHPSDDNLPPGFGGP), 159-191 (DSASDFPTQSGVDVGTEPSITDENTSTSSTLPA), and 333-356 (QPGGGPNPEMVNSSNNNQRPRDSK). Residues 176–189 (PSITDENTSTSSTL) show a composition bias toward polar residues. The C3H1-type zinc-finger motif lies at 357-385 (PKIMKACMYFNSARGCRHGANCMYQHDAT). Over residues 389–403 (PRNLNNGNINTSDMQ) the composition is skewed to polar residues. A disordered region spans residues 389 to 413 (PRNLNNGNINTSDMQNAKRMRFDRD).

The chain is Zinc finger CCCH domain-containing protein 6 from Arabidopsis thaliana (Mouse-ear cress).